A 510-amino-acid polypeptide reads, in one-letter code: Inositol-3-phosphate synthase (510 aa).

Residues Gly-70, Gly-71, Asn-72, Asn-73, Asp-143, Ile-180, Gln-190, Arg-193, Thr-230, Ala-231, Asn-232, Thr-233, Gly-281, Ser-282, Asp-306, Ser-309, Asn-340, Asn-341, Asp-342, Lys-355, Gly-393, Asp-394, Asp-422, and Ser-423 each coordinate NAD(+).

The protein belongs to the myo-inositol 1-phosphate synthase family. NAD(+) is required as a cofactor.

The protein resides in the cytoplasm. It localises to the cytosol. It is found in the nucleus. The catalysed reaction is D-glucose 6-phosphate = 1D-myo-inositol 3-phosphate. It functions in the pathway polyol metabolism; myo-inositol biosynthesis; myo-inositol from D-glucose 6-phosphate: step 1/2. Functionally, key enzyme in myo-inositol biosynthesis pathway that catalyzes the conversion of glucose 6-phosphate to 1-myo-inositol 1-phosphate in a NAD-dependent manner. The protein is Inositol-3-phosphate synthase of Sesamum indicum (Oriental sesame).